The sequence spans 596 residues: Arginine--tRNA ligase (596 aa).

The short motif at 128–138 (ANPTSSLHVGH) is the 'HIGH' region element.

The protein belongs to the class-I aminoacyl-tRNA synthetase family. In terms of assembly, monomer.

The protein localises to the cytoplasm. It catalyses the reaction tRNA(Arg) + L-arginine + ATP = L-arginyl-tRNA(Arg) + AMP + diphosphate. The protein is Arginine--tRNA ligase of Acinetobacter baumannii (strain SDF).